Reading from the N-terminus, the 621-residue chain is Putative DNA 3'-5' helicase Rad25 (621 aa).

In terms of domain architecture, Helicase ATP-binding spans 268-417 (VERFTEQGSG…EIFTLIGPPI (150 aa)). 281-288 (GPPGSGKT) serves as a coordination point for ATP. Residues 371–374 (DEVH) carry the DEAH box motif. Residues 441–465 (PWGDETEQSEYSSTSGHDRRQAAAS) are disordered. Residues 469–621 (KIDEIRYALA…EAVEPPAKTE (153 aa)) enclose the Helicase C-terminal domain.

This sequence belongs to the helicase family. RAD25/XPB subfamily.

The enzyme catalyses Couples ATP hydrolysis with the unwinding of duplex DNA by translocating in the 3'-5' direction.. It carries out the reaction ATP + H2O = ADP + phosphate + H(+). This chain is Putative DNA 3'-5' helicase Rad25, found in Haloarcula marismortui (strain ATCC 43049 / DSM 3752 / JCM 8966 / VKM B-1809) (Halobacterium marismortui).